A 503-amino-acid chain; its full sequence is Poxin-Schlafen (503 aa).

The active-site Proton donor is the His-15. The active-site Shared with catalytic histidine of dimeric partner is the Tyr-136. Lys-140 functions as the Proton acceptor; shared with catalytic histidine of dimeric partner in the catalytic mechanism.

In the N-terminal section; belongs to the poxin family. It in the C-terminal section; belongs to the Schlafen protein family. Subgroup poxviridae B3 subfamily. As to quaternary structure, homodimer.

The enzyme catalyses 2',3'-cGAMP + H2O = Gp(2'-5')Ap(3') + H(+). Nuclease that is responsible for viral evasion of host cGAS-STING innate immunity. Cleaves 2',3'-cGAMP which is produced by host cGAS following recognition of cytosolic DNA and blocks the subsequent 2',3'-cGAMP-mediated activation of TMEM173/STING, which normally spreads to adjacent cells and activates the interferon and NF-kappa-B immune responses. The protein is Poxin-Schlafen (OPG188) of Cynomys gunnisoni (Gunnison's prairie dog).